The chain runs to 346 residues: Methylthioribose-1-phosphate isomerase 1 (346 aa).

Residues 48–50, R91, and Q196 each bind substrate; that span reads RGA. D237 acts as the Proton donor in catalysis. A substrate-binding site is contributed by 247 to 248; sequence NK.

This sequence belongs to the eIF-2B alpha/beta/delta subunits family. MtnA subfamily.

The catalysed reaction is 5-(methylsulfanyl)-alpha-D-ribose 1-phosphate = 5-(methylsulfanyl)-D-ribulose 1-phosphate. Its pathway is amino-acid biosynthesis; L-methionine biosynthesis via salvage pathway; L-methionine from S-methyl-5-thio-alpha-D-ribose 1-phosphate: step 1/6. Catalyzes the interconversion of methylthioribose-1-phosphate (MTR-1-P) into methylthioribulose-1-phosphate (MTRu-1-P). In Pseudothermotoga lettingae (strain ATCC BAA-301 / DSM 14385 / NBRC 107922 / TMO) (Thermotoga lettingae), this protein is Methylthioribose-1-phosphate isomerase 1.